Reading from the N-terminus, the 98-residue chain is Small ribosomal subunit protein bS21B (98 aa).

Residues 61–98 (KLQREGLLPMKPKPVFGAGAGGERGGRGGPGAGPRGPR) form a disordered region. Residues 78-98 (AGAGGERGGRGGPGAGPRGPR) show a composition bias toward gly residues.

The protein belongs to the bacterial ribosomal protein bS21 family.

The polypeptide is Small ribosomal subunit protein bS21B (Bradyrhizobium diazoefficiens (strain JCM 10833 / BCRC 13528 / IAM 13628 / NBRC 14792 / USDA 110)).